The chain runs to 225 residues: Ribonuclease 3 (225 aa).

An RNase III domain is found at 5–127; that stretch reads MNKLTSKLGY…IIGAIYLDSD (123 aa). Position 40 (Glu40) interacts with Mg(2+). Residue Asp44 is part of the active site. Mg(2+) is bound by residues Asp113 and Glu116. Glu116 is a catalytic residue. Positions 154 to 224 constitute a DRBM domain; it reads DPKTRLQEFL…AETALEQLTN (71 aa).

Belongs to the ribonuclease III family. As to quaternary structure, homodimer. Requires Mg(2+) as cofactor.

The protein resides in the cytoplasm. The enzyme catalyses Endonucleolytic cleavage to 5'-phosphomonoester.. Its function is as follows. Digests double-stranded RNA. Involved in the processing of primary rRNA transcript to yield the immediate precursors to the large and small rRNAs (23S and 16S). Processes some mRNAs, and tRNAs when they are encoded in the rRNA operon. Processes pre-crRNA and tracrRNA of type II CRISPR loci if present in the organism. In Vibrio cholerae serotype O1 (strain ATCC 39315 / El Tor Inaba N16961), this protein is Ribonuclease 3.